A 146-amino-acid polypeptide reads, in one-letter code: Snake venom vascular endothelial growth factor toxin (146 aa).

Positions 1-24 (MAVYLLAVAILFCIQGWPLGTVQG) are cleaved as a signal peptide. Glutamine 25 bears the Pyrrolidone carboxylic acid mark. Cystine bridges form between cysteine 38–cysteine 80, cysteine 69–cysteine 115, and cysteine 73–cysteine 117. The interval 118–146 (RPRSASGVNSRKHKRNPEEGEPRAKFPFV) is disordered. Basic and acidic residues predominate over residues 133–146 (NPEEGEPRAKFPFV).

This sequence belongs to the PDGF/VEGF growth factor family. Snake venom VEGF subfamily. As to quaternary structure, homodimer; disulfide-linked. Interacts with VEGF receptor-1 (FLT1) with a high affinity, whereas it binds to VEGF receptor-2 (KDR) with a low affinity. Does not bind VEGF receptor-3 (FLT4). Expressed by the venom gland.

Its subcellular location is the secreted. In terms of biological role, snake venom VEGFs that may contribute to venom dispersion and prey subjugation by inducing vascular permeability and hypotension. This protein induces an increase in capillary permeability after intradermal injection, as well as a drastic hypotensive effect after intravenous injection. The hypotension is mediated by nitric oxide (NO), which is produced by VEGF-activated endothelium NO synthase. Also induces angiogenesis in vitro. Like other crotalid VEGFs, this protein interacts with VEGF receptor-1 (FLT1) with a high affinity, whereas it binds to VEGF receptor-2 (KDR) with a low affinity. The polypeptide is Snake venom vascular endothelial growth factor toxin (Bothrops jararaca (Jararaca)).